A 62-amino-acid chain; its full sequence is Ubiquinol-cytochrome c reductase complex 6.7 kDa protein (62 aa).

The Mitochondrial matrix segment spans residues 2 to 25 (TSPAAAGNGLFKFLRPKLRPQSTD). A helical transmembrane segment spans residues 26-44 (IQAAAGWGVAAVTGALWVI). Residues 45 to 62 (QPWDFLRKTFIEKQEEEK) are Mitochondrial intermembrane-facing.

Belongs to the UQCR11/QCR10 family. In terms of assembly, component of the ubiquinol-cytochrome c oxidoreductase (cytochrome b-c1 complex, complex III, CIII), a multisubunit enzyme composed of 3 respiratory subunits cytochrome b, cytochrome c1 and Rieske protein, 2 core protein subunits, and additional low-molecular weight protein subunits. The complex exists as an obligatory dimer and forms supercomplexes (SCs) in the inner mitochondrial membrane with cytochrome c oxidase (complex IV, CIV).

Its subcellular location is the mitochondrion inner membrane. Component of the ubiquinol-cytochrome c oxidoreductase, a multisubunit transmembrane complex that is part of the mitochondrial electron transport chain which drives oxidative phosphorylation. The respiratory chain contains 3 multisubunit complexes succinate dehydrogenase (complex II, CII), ubiquinol-cytochrome c oxidoreductase (cytochrome b-c1 complex, complex III, CIII) and cytochrome c oxidase (complex IV, CIV), that cooperate to transfer electrons derived from NADH and succinate to molecular oxygen, creating an electrochemical gradient over the inner membrane that drives transmembrane transport and the ATP synthase. The cytochrome b-c1 complex catalyzes electron transfer from ubiquinol to cytochrome c, linking this redox reaction to translocation of protons across the mitochondrial inner membrane, with protons being carried across the membrane as hydrogens on the quinol. In the process called Q cycle, 2 protons are consumed from the matrix, 4 protons are released into the intermembrane space and 2 electrons are passed to cytochrome c. QCR10 has a role in CIII assembly and RIP1 stability. In Solanum tuberosum (Potato), this protein is Ubiquinol-cytochrome c reductase complex 6.7 kDa protein.